Consider the following 446-residue polypeptide: DDB1- and CUL4-associated factor 12 (446 aa).

Residues 1-12 (MTRRAVSRKRRA) show a composition bias toward basic residues. Residues 1–33 (MTRRAVSRKRRAAPGTGPGEQSDWDHSAHKRKR) form a disordered region. WD repeat units lie at residues 132–173 (SHQS…PVCV), 177–215 (GHND…LSKS), 245–284 (PVNC…AKLL), and 333–370 (EQGS…FLED).

The protein belongs to the WD repeat DCAF12 family. As to quaternary structure, component of the DCX(DCAF12) E3 ubiquitin ligase complex, at least composed of cul4 (cul4a or cul4b), ddb1, dcaf12 and rbx1.

Its subcellular location is the cytoplasm. It localises to the cytoskeleton. The protein resides in the microtubule organizing center. The protein localises to the centrosome. It is found in the nucleus. It participates in protein modification; protein ubiquitination. Substrate-recognition component of a DCX (DDB1-CUL4-X-box) E3 ubiquitin-protein ligase complex of the DesCEND (destruction via C-end degrons) pathway, which recognizes a C-degron located at the extreme C terminus of target proteins, leading to their ubiquitination and degradation. The C-degron recognized by the DesCEND pathway is usually a motif of less than ten residues and can be present in full-length proteins, truncated proteins or proteolytically cleaved forms. The DCX(DCAF12) complex specifically recognizes proteins with a diglutamate (Glu-Glu) at the C-terminus leading to their ubiquitination and degradation. Also directly recognizes the C-terminal glutamate-leucine (Glu-Leu) degron as an alternative degron in proteins leading to their ubiquitination and degradation. This chain is DDB1- and CUL4-associated factor 12, found in Xenopus tropicalis (Western clawed frog).